A 343-amino-acid chain; its full sequence is Probable transposase for insertion sequence element (343 aa).

The protein belongs to the transposase mutator family.

Required for the transposition of the insertion element. The protein is Probable transposase for insertion sequence element of Corynebacterium diphtheriae.